A 142-amino-acid polypeptide reads, in one-letter code: Transcription antitermination protein NusB (142 aa).

It belongs to the NusB family.

Functionally, involved in transcription antitermination. Required for transcription of ribosomal RNA (rRNA) genes. Binds specifically to the boxA antiterminator sequence of the ribosomal RNA (rrn) operons. The protein is Transcription antitermination protein NusB of Thermotoga petrophila (strain ATCC BAA-488 / DSM 13995 / JCM 10881 / RKU-1).